The primary structure comprises 483 residues: UDP-N-acetylmuramoyl-L-alanyl-D-glutamate--2,6-diaminopimelate ligase (483 aa).

Ser-30 is a UDP-N-acetyl-alpha-D-muramoyl-L-alanyl-D-glutamate binding site. 109–115 provides a ligand contact to ATP; it reads GTNGKTT. UDP-N-acetyl-alpha-D-muramoyl-L-alanyl-D-glutamate-binding positions include 151-152, Ser-178, and Arg-186; that span reads TT. Lys-218 bears the N6-carboxylysine mark. Meso-2,6-diaminopimelate is bound by residues Arg-380, 403-406, Gly-453, and Glu-457; that span reads DNPR. Residues 403 to 406 carry the Meso-diaminopimelate recognition motif motif; the sequence is DNPR.

The protein belongs to the MurCDEF family. MurE subfamily. Mg(2+) is required as a cofactor. Post-translationally, carboxylation is probably crucial for Mg(2+) binding and, consequently, for the gamma-phosphate positioning of ATP.

It localises to the cytoplasm. It carries out the reaction UDP-N-acetyl-alpha-D-muramoyl-L-alanyl-D-glutamate + meso-2,6-diaminopimelate + ATP = UDP-N-acetyl-alpha-D-muramoyl-L-alanyl-gamma-D-glutamyl-meso-2,6-diaminopimelate + ADP + phosphate + H(+). It functions in the pathway cell wall biogenesis; peptidoglycan biosynthesis. Its function is as follows. Catalyzes the addition of meso-diaminopimelic acid to the nucleotide precursor UDP-N-acetylmuramoyl-L-alanyl-D-glutamate (UMAG) in the biosynthesis of bacterial cell-wall peptidoglycan. The protein is UDP-N-acetylmuramoyl-L-alanyl-D-glutamate--2,6-diaminopimelate ligase of Chlamydia caviae (strain ATCC VR-813 / DSM 19441 / 03DC25 / GPIC) (Chlamydophila caviae).